The following is a 345-amino-acid chain: MDGEDIPDFSSLKEETAYWKELSLKYKQTFQEARDELVEFQEGSRELEAELEAQLVQAEQRNRDLQADNQRLKYEVEALKEKLEHQYAQSYKQVSVLEDDLSQTRAIKEQLHKYVRELEQANDDLERAKRATIVSLEDFEQRLNQAIERNAFLESELDEKESLLVSVQRLKDEARDLRQELAVRERQQEVTRKSAPSSPTLDCEKMDSAVQASLSLPATPVGKGTENSFPSPKAIPNGFGTSPLTPSARISALNIVGDLLRKVGALESKLAACRNFAKDQASRKSYISGNVNCGVMNSNGTKFSRSGHTSFFDKGAVNGFDPAPPPPGLGSSRPLSAPGMLPLSV.

A coiled-coil region spans residues 27-190; sequence KQTFQEARDE…LAVRERQQEV (164 aa). The tract at residues 56-166 is self-association; sequence VQAEQRNRDL…LDEKESLLVS (111 aa). Residues 64–189 form an interaction with KATNB1 region; sequence DLQADNQRLK…ELAVRERQQE (126 aa). The segment at 114-133 is required for interaction with PAFAH1B1; the sequence is YVRELEQANDDLERAKRATI. Residues 175–345 form an interaction with CENPF region; the sequence is RDLRQELAVR…SAPGMLPLSV (171 aa). The interaction with YWHAE stretch occupies residues 189–256; sequence EVTRKSAPSS…SARISALNIV (68 aa). Residues 191–345 are interaction with NEFL; it reads TRKSAPSSPT…SAPGMLPLSV (155 aa). Residues 195–256 form an interaction with KATNA1 region; sequence APSSPTLDCE…SARISALNIV (62 aa). Ser-215 is modified (phosphoserine). Residues 217 to 240 are disordered; sequence PATPVGKGTENSFPSPKAIPNGFG. Thr-219 carries the post-translational modification Phosphothreonine; by CDK1 and MAPK1. Positions 227 to 278 are interaction with DISC1; sequence NSFPSPKAIPNGFGTSPLTPSARISALNIVGDLLRKVGALESKLAACRNFAK. Ser-231 bears the Phosphoserine mark. At Ser-242 the chain carries Phosphoserine; by CDK1. Phosphothreonine; by CDK1 and MAPK1 is present on Thr-245. The tract at residues 256–291 is required for localization to the centrosome and interaction with dynein, dynactin, tubulin gamma, PCM1 and PCNT; it reads VGDLLRKVGALESKLAACRNFAKDQASRKSYISGNV. A lipid anchor (S-palmitoyl cysteine; by ZDHHC2, ZDHHC3 and ZDHHC7) is attached at Cys-273. The disordered stretch occupies residues 316-345; it reads AVNGFDPAPPPPGLGSSRPLSAPGMLPLSV. Over residues 329–339 the composition is skewed to low complexity; sequence LGSSRPLSAPG. Ser-344 carries the phosphoserine modification.

This sequence belongs to the nudE family. Self-associates. Interacts with DISC1, dynein, dynactin, tubulin gamma, KATNA1, KATNB1, microtubules, PAFAH1B1, PCM1, PCNT, and YWHAE. Interacts directly with NEFL and indirectly with NEFH. Interacts (via C-terminus) with CENPF. Interacts with ZNF365. Interacts with PLEKHM1 (via N- and C-terminus). Interacts with GTP-bound RAB9A; the interaction may lead to RAB9A-dynein motor tethering. In terms of processing, phosphorylated in mitosis. Can be phosphorylated by CDK1, CDK5 and MAPK1. Phosphorylation by CDK5 promotes interaction with KATNA1 and YWHAE. Palmitoylation at Cys-273 reduces affinity for dynein. Expressed at low levels in heart, hypothalamus, liver, lung, spleen and stomach. Expressed at higher levels in testis and brain. Within the brain, expressed in cerebellum, cerebral stem, cortex and striatum.

The protein localises to the cytoplasm. It localises to the cytoskeleton. The protein resides in the microtubule organizing center. It is found in the centrosome. Its subcellular location is the chromosome. The protein localises to the centromere. It localises to the kinetochore. The protein resides in the spindle. Its function is as follows. Required for organization of the cellular microtubule array and microtubule anchoring at the centrosome. May regulate microtubule organization at least in part by targeting the microtubule severing protein KATNA1 to the centrosome. Also positively regulates the activity of the minus-end directed microtubule motor protein dynein. May enhance dynein-mediated microtubule sliding by targeting dynein to the microtubule plus ends. Required for several dynein- and microtubule-dependent processes such as the maintenance of Golgi integrity, the centripetal motion of secretory vesicles and the coupling of the nucleus and centrosome. Also required during brain development for the migration of newly formed neurons from the ventricular/subventricular zone toward the cortical plate. Plays a role, together with DISC1, in the regulation of neurite outgrowth. Required for mitosis in some cell types but appears to be dispensible for mitosis in cortical neuronal progenitors, which instead requires NDE1. Facilitates the polymerization of neurofilaments from the individual subunits NEFH and NEFL. Positively regulates lysosome peripheral distribution and ruffled border formation in osteoclasts. Plays a role, together with DISC1, in the regulation of neurite outgrowth. May act as a RAB9A/B effector that tethers RAB9-associated late endosomes to the dynein motor for their retrograde transport to the trans-Golgi network. This Oryctolagus cuniculus (Rabbit) protein is Nuclear distribution protein nudE-like 1 (NDEL1).